A 77-amino-acid polypeptide reads, in one-letter code: uncharacterized protein (77 aa).

The next 2 helical transmembrane spans lie at 22–42 (VFAN…LPVG) and 44–64 (LIGL…FFLG).

Its subcellular location is the cell membrane. This is an uncharacterized protein from Methanocaldococcus jannaschii (strain ATCC 43067 / DSM 2661 / JAL-1 / JCM 10045 / NBRC 100440) (Methanococcus jannaschii).